Reading from the N-terminus, the 798-residue chain is MDASVVRFSQSPARVPPEFEPDMEKIKRRLLKYGVDPTPKILNNLRKKEIQKHNRRTKRETESEAEVYTEAQKQSMEEEARFQTLRREYKQFTRSISGKRGGDVGLMVGNPWEGIERVKLKELVSGVRREEVSAGELKKENLKELKKILEKDLRWVLDDDVDVEEFDLDKEFDPAKRWRNEGEAVRVLVDRLSGREINEKHWKFVRMMNQSGLQFTEDQMLKIVDRLGRKQSWKQASAVVHWVYSDKKRKHLRSRFVYTKLLSVLGFARRPQEALQIFNQMLGDRQLYPDMAAYHCIAVTLGQAGLLKELLKVIERMRQKPTKLTKNLRQKNWDPVLEPDLVVYNAILNACVPTLQWKAVSWVFVELRKNGLRPNGATYGLAMEVMLESGKFDRVHDFFRKMKSSGEAPKAITYKVLVRALWREGKIEEAVEAVRDMEQKGVIGTGSVYYELACCLCNNGRWCDAMLEVGRMKRLENCRPLEITFTGLIAASLNGGHVDDCMAIFQYMKDKCDPNIGTANMMLKVYGRNDMFSEAKELFEEIVSRKETHLVPNEYTYSFMLEASARSLQWEYFEHVYQTMVLSGYQMDQTKHASMLIEASRAGKWSLLEHAFDAVLEDGEIPHPLFFTELLCHATAKGDFQRAITLINTVALASFQISEEEWTDLFEEHQDWLTQDNLHKLSDHLIECDYVSEPTVSNLSKSLKSRCGSSSSSAQPLLAVDVTTQSQGEKPEEDLLLQDTTMEDDNSANGEAWEFTETELETLGLEELEIDDDEESSDSDSLSVYDILKEWEESSKKE.

2 disordered regions span residues 1–21 (MDASVVRFSQSPARVPPEFEP) and 50–73 (IQKHNRRTKRETESEAEVYTEAQK). 10 PPR repeats span residues 254–284 (SRFVYTKLLSVLGFARRPQEALQIFNQMLGD), 290–324 (DMAAYHCIAVTLGQAGLLKELLKVIERMRQKPTKL), 340–374 (DLVVYNAILNACVPTLQWKAVSWVFVELRKNGLRP), 375–409 (NGATYGLAMEVMLESGKFDRVHDFFRKMKSSGEAP), 410–444 (KAITYKVLVRALWREGKIEEAVEAVRDMEQKGVIG), 445–480 (TGSVYYELACCLCNNGRWCDAMLEVGRMKRLENCRP), 481–511 (LEITFTGLIAASLNGGHVDDCMAIFQYMKDK), 515–545 (NIGTANMMLKVYGRNDMFSEAKELFEEIVSR), 553–587 (NEYTYSFMLEASARSLQWEYFEHVYQTMVLSGYQM), and 588–622 (DQTKHASMLIEASRAGKWSLLEHAFDAVLEDGEIP).

Belongs to the PPR family. P subfamily. Interacts (via C-terminus) with SIGF (via N-terminus).

The protein localises to the plastid. The protein resides in the chloroplast. Functionally, involved in the regulation of early chloroplast development and chloroplast gene expression in a SIGF-dependent manner. This is Pentatricopeptide repeat-containing protein At5g67570, chloroplastic (DG1) from Arabidopsis thaliana (Mouse-ear cress).